Consider the following 652-residue polypeptide: MLKDNQKHNESVAPNSAFLSELQRALPEFFTADRYNEQGELIAKGGFDLARFERALKARNIDELTSGYQIDFIGKDYAKKQAGEKSVTVIVPDVEHNTLAENKNSHNLFLTGDNLDVLRHLQNNYADTVDMIYIDPPYNTGSDGFVYPDHFEYSDRALQDMFGLNDTELARLKSIQGKSTHSAWLSFMYPRLFLARKLLKDTGFIFISIDDNEYANLKLMMDEIFGEGGFVTNVMWKRKKEISNDSDNVSIQGEYILVYAKTGQGALRLEPLSKEYIQKSYKEPTEQFPEGKWRPVPLTVSKGLSGGGYTYKITTPNGTVHERLWAYPEASYQKLVADNLVYFGKDNGGIPQRVMYAHHSKGQPTTNYWDNVASNKEGKKEILDLFGDNVFDTPKPTALLKKIIKLAIDKDGVVLDFFAGSGTTAHAVMALNEEDGGQRTFILCTIDQALSNNTIAKKAGYNTIDEISRERITRVAAKIRANNPATNSDLGFKHYRFATPTQQTLDDLDSFDIATGHFINTSGQLAAFTESGFTDMINPFSARGLGVPGGASGEETLLTTWLVADGYKMDIDVQTVDFSGYCARYVDNTRLYLIDERWGTEQTRDLLNHIGTHQLPVQTIVIYGYSFDLESIRELEIGLKQLDQKVNLVKRY.

The tract at residues 135–138 (DPPY) is binding of S-adenosyl methionine.

This sequence belongs to the N(4)/N(6)-methyltransferase family. As to quaternary structure, homodimer, also forms a functional restriction-competent complex with Res.

The enzyme catalyses a 2'-deoxyadenosine in DNA + S-adenosyl-L-methionine = an N(6)-methyl-2'-deoxyadenosine in DNA + S-adenosyl-L-homocysteine + H(+). A beta subtype methylase that binds the system-specific DNA recognition site 5'-CAGAG-3' and methylates A-4 (of only 1 strand as the other does not have an A residue). DNA restriction requires both the Res and Mod subunits. This is Type III restriction-modification enzyme StyLTI Mod subunit from Salmonella typhimurium (strain LT2 / SGSC1412 / ATCC 700720).